Here is a 2196-residue protein sequence, read N- to C-terminus: Non-reducing polyketide synthase CTB1 (2196 aa).

An N-terminal acylcarrier protein transacylase domain (SAT) region spans residues 11-250 (AFGDQTYDCS…TRLPITAPYH (240 aa)). One can recognise a Ketosynthase family 3 (KS3) domain in the interval 381 to 814 (KSPIAILAAS…GGNTCLVLED (434 aa)). Active-site for beta-ketoacyl synthase activity residues include cysteine 553, histidine 688, and histidine 733. Residues 922 to 1223 (AFTGQGSAFA…QTFASINKDK (302 aa)) form a malonyl-CoA:ACP transacylase (MAT) domain region. The product template (PT) domain stretch occupies residues 1298 to 1611 (SSSIHKVITN…VPKRLMHYIV (314 aa)). Positions 1302-1441 (HKVITNTITA…EKTALKSAAL (140 aa)) are N-terminal hotdog fold. The region spanning 1302–1608 (HKVITNTITA…LQGVPKRLMH (307 aa)) is the PKS/mFAS DH domain. Histidine 1335 (proton acceptor; for dehydratase activity) is an active-site residue. The C-terminal hotdog fold stretch occupies residues 1460–1608 (TYRFSKGMIY…LQGVPKRLMH (149 aa)). Catalysis depends on aspartate 1520, which acts as the Proton donor; for dehydratase activity. The tract at residues 1617 to 1666 (KASGPPTEKKTSSPPVEKKASAPVAPTRPAIQRKNASIPPPATQVTPQNK) is disordered. Over residues 1623-1636 (TEKKTSSPPVEKKA) the composition is skewed to basic and acidic residues. Carrier domains follow at residues 1671-1748 (PSVS…TRLS) and 1775-1857 (DPSP…SGST). 2 positions are modified to O-(pantetheine 4'-phosphoryl)serine: serine 1708 and serine 1816. Residues 1856–1867 (STESFDSTTTKP) are compositionally biased toward polar residues. The segment at 1856-1923 (STESFDSTTT…PPKGRIPPAW (68 aa)) is disordered. A compositionally biased stretch (low complexity) spans 1872-1887 (ATPPLTDSSASSPPSS). The segment at 1937–2187 (ILFLFPDGAG…SGAQMLVEHM (251 aa)) is thioesterase (TE) domain.

It depends on pantetheine 4'-phosphate as a cofactor.

It carries out the reaction 6 malonyl-CoA + acetyl-CoA + 6 H(+) = nor-toralactone + 6 CO2 + 7 CoA + 2 H2O. The protein operates within mycotoxin biosynthesis. Polyketide synthase; part of the gene cluster that mediates the biosynthesis of cercosporin, a light-activated, non-host-selective toxin. The perylenequinone chromophore of cercosporin absorbs light energy to attain an electronically-activated triplet state and produces active oxygen species such as the hydroxyl radical, superoxide, hydrogen peroxide or singlet oxygen upon reaction with oxygen molecules. These reactive oxygen species cause damage to various cellular components including lipids, proteins and nucleic acids. The first step of cercosporin biosynthesis is performed by the polyketide synthase CTB1 which catalyzes the formation of nor-toralactone. The starter unit acyltransferase (SAT) domain of CTB1 initiates polyketide extension by the selective utilization of acetyl-CoA, which is elongated to the heptaketide in the beta-ketoacyl synthase (KS) domain by successive condensations with six malonyl units introduced by the malonyl acyltransferase (MAT) domain. The product template (PT) domain catalyzes C4-C9 and C2-C11 aldol cyclizations and dehydrations to a trihydroxynaphthalene, which is thought to be delivered to the thioesterase (TE) domain for product release. The bifunctional enzyme CTB3 then methylates nor-toralactone to toralactone before conducting an unusual oxidative aromatic ring opening. The O-methyltransferase CTB2 further methylates the nascent OH-6 of the CBT3 product, blocking further oxidation at this site before the reductase CTB6 reduces the 2-oxopropyl ketone at position C7, giving naphthalene. The FAD-dependent monooxygenase CTB5 in concert with the multicopper oxidase CTB12 are responsible for homodimerization of naphthalene with CTB7 installing the dioxepine moiety, finally producing cercosporin. The fasciclin domain-containing protein CTB11 might act with CTB5 and CTB12 whereas the roles of CTB9 and CTB10 have still to be elucidated. The sequence is that of Non-reducing polyketide synthase CTB1 from Cercospora nicotianae (Barn spot disease fungus).